Here is a 172-residue protein sequence, read N- to C-terminus: Disulfide bond formation protein B (172 aa).

At 1–11 (MNPFRWGFRAQ) the chain is on the cytoplasmic side. A helical transmembrane segment spans residues 12-28 (FLLGFLACAGLLAYAIY). Residues 29–46 (VQLHLGLEPCPLCIFQRI) lie on the Periplasmic side of the membrane. An intrachain disulfide couples Cys-38 to Cys-41. A helical transmembrane segment spans residues 47–63 (AFATLALLFLLGALHGP). The Cytoplasmic portion of the chain corresponds to 64 to 70 (RGAGGRK). Residues 71–88 (AYGVLAFIAAGVGMGIAA) traverse the membrane as a helical segment. Topologically, residues 89-145 (RHVWVQIRPKDMMSSCGPPLSFLSETMGPFEVFRTVLTGTGDCGNIDWRFLGLSMPM) are periplasmic. A disulfide bridge links Cys-104 with Cys-131. A helical membrane pass occupies residues 146–164 (WSMVWFVGLALWALYAGFK). Over 165 to 172 (HRGPRKLF) the chain is Cytoplasmic.

This sequence belongs to the DsbB family.

It is found in the cell inner membrane. Functionally, required for disulfide bond formation in some periplasmic proteins. Acts by oxidizing the DsbA protein. This chain is Disulfide bond formation protein B, found in Xanthomonas campestris pv. campestris (strain 8004).